The chain runs to 433 residues: MTHFSPREIVSELDRFIVGQTDAKRAVSIALRNRWRRQQLTGSMREEVLPKNILMIGPTGVGKTEIARRLAKLANAPFIKVEATKFTEVGYVGRDVEQIVRDLVEVAIGQTRERKRKDVQARAQLAAEERVLDALVGANASAATRDSFRRKLRAGDLNDKEIEIETQSSGGAPMFEIPGMPGAQVGAISIGDIFGKMGGRTKTRRLTVVDSYEILVNEESDKLLDSDQLTQEAIAAVENNGIVFLDEIDKICVRDGRSGGDVSREGVQRDLLPLIEGTTVSTKHGAVKTDHILFIASGAFHIAKPSDLLPELQGRLPIRVELDALTRNDMRRILTEPEASLIKQYVALMQTEGVTLDITDDAIDALADIAVAVNSTVENIGARRLQTVMERVLDDISFSAPDRNGETVRIDAGYVQKHIGDLAKNADLSRFIL.

ATP-binding positions include Val18, 60-65 (GVGKTE), Asp246, Glu311, and Arg383.

It belongs to the ClpX chaperone family. HslU subfamily. As to quaternary structure, a double ring-shaped homohexamer of HslV is capped on each side by a ring-shaped HslU homohexamer. The assembly of the HslU/HslV complex is dependent on binding of ATP.

It is found in the cytoplasm. ATPase subunit of a proteasome-like degradation complex; this subunit has chaperone activity. The binding of ATP and its subsequent hydrolysis by HslU are essential for unfolding of protein substrates subsequently hydrolyzed by HslV. HslU recognizes the N-terminal part of its protein substrates and unfolds these before they are guided to HslV for hydrolysis. This chain is ATP-dependent protease ATPase subunit HslU, found in Nitrobacter hamburgensis (strain DSM 10229 / NCIMB 13809 / X14).